The sequence spans 329 residues: Putative dehydrogenase RB0419 (329 aa).

The protein belongs to the ornithine cyclodeaminase/mu-crystallin family.

This is Putative dehydrogenase RB0419 from Rhizobium meliloti (strain 1021) (Ensifer meliloti).